Here is a 208-residue protein sequence, read N- to C-terminus: Protein-L-isoaspartate O-methyltransferase (208 aa).

Ser59 is an active-site residue.

Belongs to the methyltransferase superfamily. L-isoaspartyl/D-aspartyl protein methyltransferase family.

The protein resides in the cytoplasm. It carries out the reaction [protein]-L-isoaspartate + S-adenosyl-L-methionine = [protein]-L-isoaspartate alpha-methyl ester + S-adenosyl-L-homocysteine. Its function is as follows. Catalyzes the methyl esterification of L-isoaspartyl residues in peptides and proteins that result from spontaneous decomposition of normal L-aspartyl and L-asparaginyl residues. It plays a role in the repair and/or degradation of damaged proteins. The protein is Protein-L-isoaspartate O-methyltransferase of Klebsiella pneumoniae subsp. pneumoniae (strain ATCC 700721 / MGH 78578).